A 470-amino-acid chain; its full sequence is Putative bifunctional phosphatase/peptidyl-prolyl cis-trans isomerase (470 aa).

Asp-22 acts as the Nucleophile in catalysis. Mg(2+) contacts are provided by Asp-22, Asp-24, and Asp-221. The region spanning 286-468 (TGPKVTIKTN…EDVIIETIEV (183 aa)) is the PPIase cyclophilin-type domain.

This sequence in the C-terminal section; belongs to the cyclophilin-type PPIase family. PPIL1 subfamily. Mg(2+) is required as a cofactor.

It carries out the reaction [protein]-peptidylproline (omega=180) = [protein]-peptidylproline (omega=0). Its function is as follows. PPIases accelerate the folding of proteins. It catalyzes the cis-trans isomerization of proline imidic peptide bonds in oligopeptides. The chain is Putative bifunctional phosphatase/peptidyl-prolyl cis-trans isomerase from Streptococcus pyogenes serotype M6 (strain ATCC BAA-946 / MGAS10394).